A 303-amino-acid chain; its full sequence is Uridine diphosphate glucose pyrophosphatase NUDT22 (303 aa).

Residues Phe56, Tyr87, Arg139, Ala144, Asp151, His156, and Glu158 each contribute to the substrate site. One can recognise a Nudix hydrolase domain in the interval 118–285 (ADPLGVGAAL…KGAIILYNRV (168 aa)). Residues 148-168 (GLVDVPGGHPEPQALCPGGSP) form a disordered region. Positions 175-196 (GQLVVHELFSSVLQEICDEVNL) match the Nudix box motif. The Mg(2+) site is built by Glu189 and Glu193. Ser274 lines the substrate pocket.

It belongs to the Nudix hydrolase family. Mg(2+) serves as cofactor.

It carries out the reaction UDP-sugar + H2O = UMP + alpha-D-aldose 1-phosphate.. Functionally, hydrolyzes UDP-glucose to glucose 1-phosphate and UMP and UDP-galactose to galactose 1-phosphate and UMP. Preferred substrate is UDP-glucose. In Homo sapiens (Human), this protein is Uridine diphosphate glucose pyrophosphatase NUDT22 (NUDT22).